The following is a 377-amino-acid chain: Opsin, blue-sensitive (377 aa).

The Extracellular segment spans residues 1–56; sequence MLLHNKTLAGKALAFIAEEGYVPSMREKFLGWNVPPEYSDLVHPHWRAFPAPGKHF. Residue Asn5 is glycosylated (N-linked (GlcNAc...) asparagine). Residues 57-81 traverse the membrane as a helical segment; sequence HIGLAIIYSMLLIMSLVGNCCVIWI. Residues 82–93 are Cytoplasmic-facing; the sequence is FSTSKSLRTPSN. Residues 94–119 traverse the membrane as a helical segment; sequence MFIVSLAIFDIIMAFEMPMLVISSFM. Residues 120–132 are Extracellular-facing; sequence ERMIGWEIGCDVY. A disulfide bond links Cys129 and Cys206. The helical transmembrane segment at 133–152 threads the bilayer; sequence SVFGSISGMGQAMTNAAIAF. Residues 153-170 lie on the Cytoplasmic side of the membrane; the sequence is DRYRTISCPIDGRLNSKQ. Residues 171–195 traverse the membrane as a helical segment; that stretch reads AAVIIAFTWFWVTPFTVLPLLKVWG. The Extracellular portion of the chain corresponds to 196 to 219; sequence RYTTEGFLTTCSFDFLTDDEDTKV. Residues 220 to 247 form a helical membrane-spanning segment; sequence FVTCIFIWAYVIPLIFIILFYSRLLSSI. The Cytoplasmic segment spans residues 248–282; sequence RNHEKMLREQAKKMNVKSLVSNQDKERSAEVRIAK. The helical transmembrane segment at 283–306 threads the bilayer; sequence VAFTIFFLFLLAWTPYATVALIGV. Residues 307-314 lie on the Extracellular side of the membrane; that stretch reads YGNRELLT. Residues 315–339 form a helical membrane-spanning segment; it reads PVSTMLPAVFAKTVSCIDPWIYAIN. Lys326 carries the post-translational modification N6-(retinylidene)lysine. Over 340 to 377 the chain is Cytoplasmic; sequence HPRYRQELQKRCKWMGIHEPETTSDATSAQTEKIKTDE.

It belongs to the G-protein coupled receptor 1 family. Opsin subfamily. Post-translationally, phosphorylated on some or all of the serine and threonine residues present in the C-terminal region. As to expression, expressed in the dorsal region of the retina and sparsely expressed in the ventral region.

The protein resides in the membrane. Visual pigments are the light-absorbing molecules that mediate vision. They consist of an apoprotein, opsin, covalently linked to 11-cis-retinal. This chain is Opsin, blue-sensitive (BLOP), found in Apis mellifera (Honeybee).